A 91-amino-acid chain; its full sequence is Small ribosomal subunit protein bS18 (91 aa).

It belongs to the bacterial ribosomal protein bS18 family. Part of the 30S ribosomal subunit. Forms a tight heterodimer with protein bS6.

In terms of biological role, binds as a heterodimer with protein bS6 to the central domain of the 16S rRNA, where it helps stabilize the platform of the 30S subunit. This chain is Small ribosomal subunit protein bS18, found in Paraburkholderia xenovorans (strain LB400).